A 404-amino-acid polypeptide reads, in one-letter code: Dual-specificity RNA methyltransferase RlmN (404 aa).

The active-site Proton acceptor is the glutamate 118. Positions 125-357 (VGRAGALCVS…NKAGYSSPIR (233 aa)) constitute a Radical SAM core domain. An intrachain disulfide couples cysteine 132 to cysteine 368. Residues cysteine 139, cysteine 143, and cysteine 146 each contribute to the [4Fe-4S] cluster site. Residues 194–195 (GE), serine 226, 248–250 (SLH), and asparagine 325 contribute to the S-adenosyl-L-methionine site. The S-methylcysteine intermediate role is filled by cysteine 368.

The protein belongs to the radical SAM superfamily. RlmN family. It depends on [4Fe-4S] cluster as a cofactor.

The protein localises to the cytoplasm. The enzyme catalyses adenosine(2503) in 23S rRNA + 2 reduced [2Fe-2S]-[ferredoxin] + 2 S-adenosyl-L-methionine = 2-methyladenosine(2503) in 23S rRNA + 5'-deoxyadenosine + L-methionine + 2 oxidized [2Fe-2S]-[ferredoxin] + S-adenosyl-L-homocysteine. It catalyses the reaction adenosine(37) in tRNA + 2 reduced [2Fe-2S]-[ferredoxin] + 2 S-adenosyl-L-methionine = 2-methyladenosine(37) in tRNA + 5'-deoxyadenosine + L-methionine + 2 oxidized [2Fe-2S]-[ferredoxin] + S-adenosyl-L-homocysteine. In terms of biological role, specifically methylates position 2 of adenine 2503 in 23S rRNA and position 2 of adenine 37 in tRNAs. m2A2503 modification seems to play a crucial role in the proofreading step occurring at the peptidyl transferase center and thus would serve to optimize ribosomal fidelity. This chain is Dual-specificity RNA methyltransferase RlmN, found in Caulobacter vibrioides (strain ATCC 19089 / CIP 103742 / CB 15) (Caulobacter crescentus).